A 297-amino-acid chain; its full sequence is Putative peptidyl-prolyl cis-trans isomerase YacD (297 aa).

An N-terminal signal peptide occupies residues 1–32 (MKSRTIWTIILGALLVCCIAVAYTLTKSQAGA). In terms of domain architecture, PpiC spans 154-247 (DDSYRIRHIV…NGYAIIQLKE (94 aa)).

It carries out the reaction [protein]-peptidylproline (omega=180) = [protein]-peptidylproline (omega=0). The sequence is that of Putative peptidyl-prolyl cis-trans isomerase YacD (yacD) from Bacillus subtilis (strain 168).